Consider the following 335-residue polypeptide: Holliday junction branch migration complex subunit RuvB (335 aa).

Positions 1 to 181 are large ATPase domain (RuvB-L); sequence MDRIVEIEKY…FGMQFRLEFY (181 aa). Leu20 provides a ligand contact to ATP. Arg21, Tyr28, Ile29, Gly62, Leu63, Gly64, Lys65, Thr66, and Thr67 together coordinate ADP. ATP is bound by residues 128 to 130 and Arg171; that span reads EDY. Tyr181 and Arg218 together coordinate ADP. A small ATPAse domain (RuvB-S) region spans residues 182–252; the sequence is KDSELALILQ…RANEALNSLG (71 aa). The tract at residues 255 to 335 is head domain (RuvB-H); the sequence is ELGFDAMDLR…LNYEKTLFEE (81 aa). DNA is bound by residues Arg309 and Arg314.

Belongs to the RuvB family. Homohexamer. Forms an RuvA(8)-RuvB(12)-Holliday junction (HJ) complex. HJ DNA is sandwiched between 2 RuvA tetramers; dsDNA enters through RuvA and exits via RuvB. An RuvB hexamer assembles on each DNA strand where it exits the tetramer. Each RuvB hexamer is contacted by two RuvA subunits (via domain III) on 2 adjacent RuvB subunits; this complex drives branch migration. In the full resolvosome a probable DNA-RuvA(4)-RuvB(12)-RuvC(2) complex forms which resolves the HJ.

The protein localises to the cytoplasm. The catalysed reaction is ATP + H2O = ADP + phosphate + H(+). Functionally, the RuvA-RuvB-RuvC complex processes Holliday junction (HJ) DNA during genetic recombination and DNA repair, while the RuvA-RuvB complex plays an important role in the rescue of blocked DNA replication forks via replication fork reversal (RFR). RuvA specifically binds to HJ cruciform DNA, conferring on it an open structure. The RuvB hexamer acts as an ATP-dependent pump, pulling dsDNA into and through the RuvAB complex. RuvB forms 2 homohexamers on either side of HJ DNA bound by 1 or 2 RuvA tetramers; 4 subunits per hexamer contact DNA at a time. Coordinated motions by a converter formed by DNA-disengaged RuvB subunits stimulates ATP hydrolysis and nucleotide exchange. Immobilization of the converter enables RuvB to convert the ATP-contained energy into a lever motion, pulling 2 nucleotides of DNA out of the RuvA tetramer per ATP hydrolyzed, thus driving DNA branch migration. The RuvB motors rotate together with the DNA substrate, which together with the progressing nucleotide cycle form the mechanistic basis for DNA recombination by continuous HJ branch migration. Branch migration allows RuvC to scan DNA until it finds its consensus sequence, where it cleaves and resolves cruciform DNA. The protein is Holliday junction branch migration complex subunit RuvB of Campylobacter jejuni subsp. jejuni serotype O:2 (strain ATCC 700819 / NCTC 11168).